A 655-amino-acid chain; its full sequence is Epithelial sodium channel subunit gamma (655 aa).

At 1-55 (MAPGEKIKAKIKKNLPVRGPQAPTIKDLMHWYCLNTNTHGCRRIVVSRGRLRRLL) the chain is on the cytoplasmic side. Residues 56 to 76 (WIAFTLTAVALIIWQCALLVF) form a helical membrane-spanning segment. Over 77 to 547 (SFYTVSVSIK…GGQLGLWMSC (471 aa)) the chain is Extracellular. 8 disulfides stabilise this stretch: Cys-100–Cys-289, Cys-213–Cys-220, Cys-266–Cys-273, Cys-378–Cys-463, Cys-400–Cys-459, Cys-404–Cys-455, Cys-413–Cys-440, and Cys-415–Cys-429. A gating release of inhibition by proteolysis (GRIP); protease-sensitive region that is responsible for the proteolytic activation of the channel region spans residues 140 to 227 (RKRREAGSMR…SDCATYTFSS (88 aa)). N-linked (GlcNAc...) asparagine glycosylation is present at Asn-215. Residue Asn-277 is glycosylated (N-linked (GlcNAc...) asparagine). Residue Asn-503 is glycosylated (N-linked (GlcNAc...) asparagine). A helical membrane pass occupies residues 548–568 (SVVCVIEIIEVFFIDFFSIIA). At 569 to 655 (RRQWQKAKDW…LTDTQLTNEF (87 aa)) the chain is on the cytoplasmic side. Residues 582-636 (RRTPPSTETPSSQQGQDNPALDTDDDLPTFTSAMRLPPAPEAPVPGTPPPRYNTL) are disordered. Residues 585-598 (PPSTETPSSQQGQD) are compositionally biased toward polar residues. Residues 618 to 632 (PPAPEAPVPGTPPPR) show a composition bias toward pro residues. A PY motif; recruits WW domain-containing proteins and is thereby required for ubiquitination and inhibition of the channel by NEDD4 and NEDD4L motif is present at residues 629-633 (PPPRY).

This sequence belongs to the amiloride-sensitive sodium channel (TC 1.A.6) family. SCNN1G subfamily. Component of the heterotrimeric epithelial sodium channel (ENaC) composed of an alpha/SCNN1A, a beta/SCNN1B and a gamma/SCNN1G subunit. Interacts with WWP1 (via WW domains). Interacts with WWP2 (via WW domains); inhibits the channel. Interacts with the full-length immature form of PCSK9 (pro-PCSK9); inhibits ENaC by promoting its proteasomal degradation. Interacts with BPIFA1; the interaction is indirect via SCNN1B and inhibits the proteolytic maturation of SCNN1A and SCNN1G and the activation of ENaC. In terms of processing, phosphorylated on serine and threonine residues. Aldosterone and insulin increase the basal level of phosphorylation. Ubiquitinated. Can be ubiquitinated at multiple sites and undergo monoubiquitination and polyubiquitination. Ubiquitination by NEDD4 or NEDD4L inhibits the ENaC channel through endocytosis, intracellular retention and degradation of its individual subunits. Post-translationally, ENaC is activated through the proteolytic maturation of its subunits. Furin cleaves the SCNN1G subunit first, followed by cleavage by prostasin (PRSS8), which results in a stepwise increase in the open probability of the channel due to the release of an inhibitory tract. BPIFA1, which is recruited by the SCNN1B subunit, prevents the proteolytic activation of ENaC. In terms of processing, N-glycosylated. N-linked glycans are processed to complex type during ENaC complex assembly and transport to the plasma membrane. As to expression, lung and kidney.

It is found in the apical cell membrane. The enzyme catalyses Na(+)(in) = Na(+)(out). Originally identified and characterized by its inhibition by the diuretic drug amiloride. Its function is as follows. This is one of the three pore-forming subunits of the heterotrimeric epithelial sodium channel (ENaC), a critical regulator of sodium balance and fluid homeostasis. ENaC operates in epithelial tissues, where it mediates the electrodiffusion of sodium ions from extracellular fluid through the apical membrane of cells, with water following osmotically. It plays a key role in maintaining sodium homeostasis through electrogenic sodium reabsorption in the kidneys. Additionally, ENaC is essential for airway surface liquid homeostasis, which is crucial for proper mucus clearance. The protein is Epithelial sodium channel subunit gamma of Mus musculus (Mouse).